Reading from the N-terminus, the 691-residue chain is Elongation factor G (691 aa).

Positions glutamate 8–isoleucine 283 constitute a tr-type G domain. Residues alanine 17–threonine 24, aspartate 81–histidine 85, and asparagine 135–aspartate 138 each bind GTP.

Belongs to the TRAFAC class translation factor GTPase superfamily. Classic translation factor GTPase family. EF-G/EF-2 subfamily.

It is found in the cytoplasm. Catalyzes the GTP-dependent ribosomal translocation step during translation elongation. During this step, the ribosome changes from the pre-translocational (PRE) to the post-translocational (POST) state as the newly formed A-site-bound peptidyl-tRNA and P-site-bound deacylated tRNA move to the P and E sites, respectively. Catalyzes the coordinated movement of the two tRNA molecules, the mRNA and conformational changes in the ribosome. The polypeptide is Elongation factor G (Xanthobacter autotrophicus (strain ATCC BAA-1158 / Py2)).